The following is a 581-amino-acid chain: uncharacterized protein (581 aa).

It belongs to the UbiD family.

This is an uncharacterized protein from Chlamydia caviae (strain ATCC VR-813 / DSM 19441 / 03DC25 / GPIC) (Chlamydophila caviae).